Consider the following 1820-residue polypeptide: Histone-lysine N-methyltransferase, H3 lysine-9 specific (1820 aa).

12 disordered regions span residues 1-54 (MPGA…TSMR), 74-251 (NLLP…TPVT), 284-618 (SLSD…APTK), 634-681 (SSER…KKAV), 804-836 (NVDDQDSAQPQNQTPLPSAISVSSKKNHGSLSK), 850-893 (SSTL…VNSW), 911-944 (HAKKKWKERERGKEREKEKVREKEKAEEENEQLR), 966-996 (DVESRTRSIPRADGETRKRPPSPGISVSTDA), 1063-1126 (PLSV…NGAV), 1183-1270 (RYAV…DRTA), 1296-1335 (KASAVSPVPSANRPSPAPSAKADLLPQKRKRRLKKITSQQ), and 1385-1407 (RSEPRTKREPIEEDNNEYFTDSD). Positions 11–31 (VDNPLVLDSSDSDDNLSGLPL) are enriched in low complexity. A compositionally biased stretch (polar residues) spans 109–129 (ADSSSPPENQNVISFLGNHSQ). A compositionally biased stretch (low complexity) spans 152–169 (GGENIAGQNNEANAAQAA). Polar residues-rich tracts occupy residues 174–204 (GTPSLTLSSNRPQSVSGAQLVVASSSRSAIN) and 212–222 (SIPQQSPSSRA). Composition is skewed to low complexity over residues 226 to 236 (RSASIASSRSR), 284 to 311 (SLSDPTILSPPSATSAPPNSPIPSTSTT), and 339 to 352 (TPATTSPAGPGPSA). The segment covering 361 to 370 (KSSDQKESPR) has biased composition (basic and acidic residues). Over residues 374–385 (SKQPSSPSSTHG) the composition is skewed to polar residues. A compositionally biased stretch (low complexity) spans 400–424 (SATSGKSSAASSRSKSRAPLSSRAA). The span at 433 to 442 (SKTTSVSSTH) shows a compositional bias: polar residues. Residues 443–459 (PPSRASPSSLPSQSQRQ) are compositionally biased toward low complexity. A compositionally biased stretch (polar residues) spans 479-510 (TLSSGTGQSTPSKFSLPTSDVASNQKNKSTGL). Low complexity-rich tracts occupy residues 514–531 (PKKPSSTPTSSIPQRTST), 551–563 (QSSSEASRSIQTS), and 594–618 (TKATTLFHTTSSPPSPSQSTSAPTK). 2 stretches are compositionally biased toward polar residues: residues 643–662 (GKSQTSDSVVAPAASQTAAS) and 810–827 (SAQPQNQTPLPSAISVSS). A compositionally biased stretch (low complexity) spans 850-861 (SSTLGDSVSGLG). Residues 869-893 (TQSMPQSPLPTTNTNNSSGIEVNSW) are compositionally biased toward polar residues. Basic and acidic residues-rich tracts occupy residues 917–944 (KERERGKEREKEKVREKEKAEEENEQLR) and 966–983 (DVESRTRSIPRADGETRK). Residues 1076–1089 (SSSSTSTPSLLSRS) are compositionally biased toward low complexity. Positions 1296 to 1320 (KASAVSPVPSANRPSPAPSAKADLL) are enriched in low complexity. The 70-residue stretch at 1516–1585 (LGCDCDGPCD…ECMNRVIQRG (70 aa)) folds into the Pre-SET domain. Zn(2+)-binding residues include cysteine 1518, cysteine 1520, cysteine 1524, cysteine 1531, cysteine 1533, cysteine 1567, cysteine 1571, cysteine 1573, and cysteine 1577. An SET domain is found at 1590–1750 (TGIEIFKTKE…KHEELCISYK (161 aa)). S-adenosyl-L-methionine contacts are provided by residues 1600–1602 (KGW), tyrosine 1643, arginine 1704, and 1707–1708 (NH). Cysteine 1710 contributes to the Zn(2+) binding site. A disordered region spans residues 1756 to 1794 (DDIPSPEPVKKKKGGKGKKQMSKTSASAHPPEMTALNSD). Residues 1765 to 1776 (KKKKGGKGKKQM) are compositionally biased toward basic residues. The 17-residue stretch at 1800-1816 (VKDICRCGAKNCDGRMF) folds into the Post-SET domain. The Zn(2+) site is built by cysteine 1804, cysteine 1806, and cysteine 1811.

This sequence belongs to the class V-like SAM-binding methyltransferase superfamily. Histone-lysine methyltransferase family. Suvar3-9 subfamily.

It localises to the nucleus. The protein localises to the chromosome. The catalysed reaction is N(6)-methyl-L-lysyl(9)-[histone H3] + S-adenosyl-L-methionine = N(6),N(6)-dimethyl-L-lysyl(9)-[histone H3] + S-adenosyl-L-homocysteine + H(+). The enzyme catalyses L-lysyl(9)-[histone H3] + S-adenosyl-L-methionine = N(6)-methyl-L-lysyl(9)-[histone H3] + S-adenosyl-L-homocysteine + H(+). Its function is as follows. Histone methyltransferase that specifically dimethylates histone H3 to form H3K9me2. H3K9me2 represents a specific tag for epigenetic transcriptional repression by recruiting HP1 proteins to methylated histones. Mainly functions in heterochromatin regions, thereby playing a central role in the establishment of constitutive heterochromatin at centromeric regions. The chain is Histone-lysine N-methyltransferase, H3 lysine-9 specific from Cryptococcus neoformans var. grubii serotype A (strain H99 / ATCC 208821 / CBS 10515 / FGSC 9487) (Filobasidiella neoformans var. grubii).